The following is a 478-amino-acid chain: Stromelysin-1 (478 aa).

Residues 1 to 17 (MQNLPALLLFCGVVCSA) form the signal peptide. A propeptide spans 18–99 (YPVDRAAEDE…PRCGVPDVGD (82 aa)) (activation peptide). The Cysteine switch signature appears at 90–97 (PRCGVPDV). C92 is a Zn(2+) binding site. Ca(2+) contacts are provided by D124 and D158. Zn(2+) is bound by residues H168 and D170. D175, G176, G178, and V180 together coordinate Ca(2+). H183 is a Zn(2+) binding site. Residues G190 and D194 each coordinate Ca(2+). Zn(2+) is bound at residue H196. Positions 198, 199, and 201 each coordinate Ca(2+). H218 is a Zn(2+) binding site. E219 is a catalytic residue. Positions 222 and 228 each coordinate Zn(2+). A disordered region spans residues 260–286 (QSLYGGPPSDSSNDPVVPTESVPPGPG). Low complexity predominate over residues 266–277 (PPSDSSNDPVVP). Hemopexin repeat units lie at residues 288 to 337 (PAAC…WPSL), 338 to 384 (PSGL…GFPP), 386 to 434 (VKKI…FPGV), and 435 to 478 (DSKV…WLNC). A disulfide bridge connects residues C291 and C478. Position 298 (D298) interacts with Ca(2+). Residues D390 and D439 each coordinate Ca(2+). N452 carries N-linked (GlcNAc...) asparagine glycosylation.

It belongs to the peptidase M10A family. Ca(2+) serves as cofactor. It depends on Zn(2+) as a cofactor.

It localises to the secreted. It is found in the extracellular space. The protein resides in the extracellular matrix. The catalysed reaction is Preferential cleavage where P1', P2' and P3' are hydrophobic residues.. Functionally, metalloproteinase with a rather broad substrate specificity that can degrade fibronectin, laminin, gelatins of type I, III, IV, and V; collagens III, IV, X, and IX, and cartilage proteoglycans. Activates different molecules including growth factors, plasminogen or other matrix metalloproteinases such as MMP9. Once released into the extracellular matrix (ECM), the inactive pro-enzyme is activated by the plasmin cascade signaling pathway. Also acts intracellularly. For example, in dopaminergic neurons, gets activated by the serine protease HTRA2 upon stress and plays a pivotal role in DA neuronal degeneration by mediating microglial activation and alpha-synuclein/SNCA cleavage. In addition, plays a role in immune response and possesses antiviral activity against various viruses. Mechanistically, translocates from the cytoplasm into the cell nucleus upon virus infection to influence NF-kappa-B activities. This is Stromelysin-1 (MMP3) from Canis lupus familiaris (Dog).